The chain runs to 531 residues: Non-muscle caldesmon (531 aa).

Positions 20–200 are myosin and calmodulin-binding; it reads AYQRNDDDEE…LKGGNLGENQ (181 aa). The disordered stretch occupies residues 21–379; the sequence is YQRNDDDEEE…KKPFKCFTPK (359 aa). A compositionally biased stretch (basic and acidic residues) spans 41–50; the sequence is QERLRQKQEE. Polar residues predominate over residues 54–68; that stretch reads GQVTDQVEAHVQNSA. Residues 93-116 show a composition bias toward basic and acidic residues; the sequence is RLARREERRQKRLQEALERQKEFD. The span at 120 to 133 shows a compositional bias: polar residues; it reads TDGSLSVPSRRMQN. Serine 123 carries the post-translational modification Phosphoserine. The segment covering 143–156 has biased composition (basic and acidic residues); it reads GEEKGESRSGRYEM. Polar residues predominate over residues 162 to 172; it reads VITSYQKNSYQ. The segment covering 200 to 227 has biased composition (basic and acidic residues); it reads QIKDEKIKKDKEPKEEVKNFLDRKKGFT. Phosphoserine; by CDK1 is present on serine 249. 2 stretches are compositionally biased toward basic and acidic residues: residues 271 to 297 and 305 to 372; these read AGKRLEELRRRRGETESEEFEKLKQKQ and EELK…DKKP. The segment at 303-360 is tropomyosin-binding; that stretch reads ELEELKKKREERRKVLEEEEQRRKQEEADRKAREEEEKRRLKEEIERRRAEAAEKRQK. Serine 382 is subject to Phosphoserine. Residue lysine 384 forms a Glycyl lysine isopeptide (Lys-Gly) (interchain with G-Cter in SUMO2) linkage. Positions 392 to 424 are strong actin-binding; sequence LNKSVQKSGVKSTHQAAVVSKIDSRLEQYTNAI. Serine 395 is modified (phosphoserine). Residues 402–412 form a tropomyosin-binding region; it reads KSTHQAAVVSK. Residues 454 to 460 form a calmodulin-binding region; it reads WEKGSVF. Residues 458-531 are disordered; sequence SVFSSPSASG…VDKVTSPTKV (74 aa). Positions 459 to 471 are enriched in polar residues; the sequence is VFSSPSASGTPNK. The residue at position 462 (serine 462) is a Phosphoserine; by CDK1. Residue threonine 468 is modified to Phosphothreonine; by CDK1. A phosphoserine; by CDK1 mark is found at serine 491 and serine 497. Basic and acidic residues predominate over residues 503 to 522; it reads SDLRPGDVSGKRNLWEKQSV. Residues 506 to 531 form a weak actin-binding region; it reads RPGDVSGKRNLWEKQSVDKVTSPTKV. Serine 527 bears the Phosphoserine; by CDK1 mark.

This sequence belongs to the caldesmon family. In non-muscle cells, phosphorylation by CDK1 during mitosis causes caldesmon to dissociate from microfilaments. Phosphorylation reduces caldesmon binding to actin, myosin, and calmodulin as well as its inhibition of actomyosin ATPase activity. Phosphorylation also occurs in both quiescent and dividing smooth muscle cells with similar effects on the interaction with actin and calmodulin and on microfilaments reorganization. CDK1-mediated phosphorylation promotes Schwann cell migration during peripheral nerve regeneration. As to expression, high-molecular-weight caldesmon (h-caldesmon) is predominantly expressed in smooth muscles, whereas low-molecular-weight caldesmon (l-caldesmon) is widely distributed in non-muscle tissues and cells. Not expressed in skeletal muscle or heart.

The protein localises to the cytoplasm. It localises to the cytoskeleton. The protein resides in the myofibril. It is found in the stress fiber. Its function is as follows. Actin- and myosin-binding protein implicated in the regulation of actomyosin interactions in smooth muscle and nonmuscle cells (could act as a bridge between myosin and actin filaments). Stimulates actin binding of tropomyosin which increases the stabilization of actin filament structure. In muscle tissues, inhibits the actomyosin ATPase by binding to F-actin. This inhibition is attenuated by calcium-calmodulin and is potentiated by tropomyosin. Interacts with actin, myosin, two molecules of tropomyosin and with calmodulin. Also plays an essential role during cellular mitosis and receptor capping. Involved in Schwann cell migration during peripheral nerve regeneration. The protein is Non-muscle caldesmon (Cald1) of Rattus norvegicus (Rat).